Consider the following 305-residue polypeptide: Protoheme IX farnesyltransferase (305 aa).

The next 9 helical transmembrane spans lie at Ile-31–Val-51, Pro-53–Phe-73, Ile-98–Leu-118, Leu-124–Trp-144, Ile-153–Gly-173, Val-181–Ile-201, Ala-221–Tyr-241, Pro-242–Ile-262, and Ser-285–Ala-305.

Belongs to the UbiA prenyltransferase family. Protoheme IX farnesyltransferase subfamily.

It is found in the cell inner membrane. It carries out the reaction heme b + (2E,6E)-farnesyl diphosphate + H2O = Fe(II)-heme o + diphosphate. It functions in the pathway porphyrin-containing compound metabolism; heme O biosynthesis; heme O from protoheme: step 1/1. Its function is as follows. Converts heme B (protoheme IX) to heme O by substitution of the vinyl group on carbon 2 of heme B porphyrin ring with a hydroxyethyl farnesyl side group. In Gloeobacter violaceus (strain ATCC 29082 / PCC 7421), this protein is Protoheme IX farnesyltransferase.